Reading from the N-terminus, the 62-residue chain is Sperm protamine P1 (62 aa).

The disordered stretch occupies residues 1 to 62 (MARYRRHSRS…RRYSRRRRRY (62 aa)).

The protein belongs to the protamine P1 family. As to expression, testis.

The protein resides in the nucleus. The protein localises to the chromosome. Functionally, protamines substitute for histones in the chromatin of sperm during the haploid phase of spermatogenesis. They compact sperm DNA into a highly condensed, stable and inactive complex. This Sminthopsis longicaudata (Long-tailed dunnart) protein is Sperm protamine P1 (PRM1).